Here is a 177-residue protein sequence, read N- to C-terminus: T-cell receptor beta chain C region (177 aa).

A c region region spans residues 1–150 (EDLANVSAPQ…GVLSATVLYE (150 aa)). N-linked (GlcNAc...) asparagine glycans are attached at residues Asn-5 and Asn-22. A disulfide bridge connects residues Cys-31 and Cys-96. A helical membrane pass occupies residues 146–168 (TVLYEILLGKATLYAVLVSALVL). Residues 169–177 (MAMVKRKDS) are Cytoplasmic-facing.

The protein resides in the membrane. The chain is T-cell receptor beta chain C region from Oryctolagus cuniculus (Rabbit).